We begin with the raw amino-acid sequence, 284 residues long: 2-dehydro-3-deoxyphosphooctonate aldolase (284 aa).

It belongs to the KdsA family.

The protein resides in the cytoplasm. The catalysed reaction is D-arabinose 5-phosphate + phosphoenolpyruvate + H2O = 3-deoxy-alpha-D-manno-2-octulosonate-8-phosphate + phosphate. The protein operates within carbohydrate biosynthesis; 3-deoxy-D-manno-octulosonate biosynthesis; 3-deoxy-D-manno-octulosonate from D-ribulose 5-phosphate: step 2/3. It functions in the pathway bacterial outer membrane biogenesis; lipopolysaccharide biosynthesis. The sequence is that of 2-dehydro-3-deoxyphosphooctonate aldolase from Burkholderia cenocepacia (strain ATCC BAA-245 / DSM 16553 / LMG 16656 / NCTC 13227 / J2315 / CF5610) (Burkholderia cepacia (strain J2315)).